The following is a 511-amino-acid chain: Pentatricopeptide repeat-containing protein At5g08510 (511 aa).

PPR repeat units lie at residues 46–80 (CTFLYNKLIQAYYVHHQPHESIVLYNLLSFDGLRP), 81–115 (SHHTFNFIFAASASFSSARPLRLLHSQFFRSGFES), 116–146 (DSFCCTTLITAYAKLGALCCARRVFDEMSKR), 147–181 (DVPVWNAMITGYQRRGDMKAAMELFDSMPRKNVTS), 182–213 (WTTVISGFSQNGNYSEALKMFLCMEKDKSVKP), 214–248 (NHITVVSVLPACANLGELEIGRRLEGYARENGFFD), 249–279 (NIYVCNATIEMYSKCGMIDVAKRLFEELGNQ), 281–315 (NLCSWNSMIGSLATHGKHDEALTLFAQMLREGEKP), 316–346 (DAVTFVGLLLACVHGGMVVKGQELFKSMEEV), and 352–382 (KLEHYGCMIDLLGRVGKLQEAYDLIKTMPMK). Residues 387–462 (VWGTLLGACS…AAGYSYFVEV (76 aa)) are type E motif. The type E(+) motif stretch occupies residues 463–494 (GVDVHKFTVEDKSHPRSYEIYQVLEEIFRRMK).

Belongs to the PPR family. PCMP-E subfamily.

The sequence is that of Pentatricopeptide repeat-containing protein At5g08510 (PCMP-E20) from Arabidopsis thaliana (Mouse-ear cress).